The sequence spans 912 residues: Coiled-coil domain-containing protein 162 (912 aa).

Coiled-coil stretches lie at residues 1-35 (MFKS…FSFA) and 220-276 (VLLG…VVMS).

This chain is Coiled-coil domain-containing protein 162, found in Mus musculus (Mouse).